A 469-amino-acid chain; its full sequence is UDP-N-acetylmuramoylalanine--D-glutamate ligase (469 aa).

123–129 (GTNGKST) contacts ATP.

This sequence belongs to the MurCDEF family.

Its subcellular location is the cytoplasm. It catalyses the reaction UDP-N-acetyl-alpha-D-muramoyl-L-alanine + D-glutamate + ATP = UDP-N-acetyl-alpha-D-muramoyl-L-alanyl-D-glutamate + ADP + phosphate + H(+). The protein operates within cell wall biogenesis; peptidoglycan biosynthesis. Its function is as follows. Cell wall formation. Catalyzes the addition of glutamate to the nucleotide precursor UDP-N-acetylmuramoyl-L-alanine (UMA). This Phenylobacterium zucineum (strain HLK1) protein is UDP-N-acetylmuramoylalanine--D-glutamate ligase.